We begin with the raw amino-acid sequence, 102 residues long: ATP-dependent Clp protease adapter protein ClpS (102 aa).

The protein belongs to the ClpS family. Binds to the N-terminal domain of the chaperone ClpA.

Its function is as follows. Involved in the modulation of the specificity of the ClpAP-mediated ATP-dependent protein degradation. This Shewanella woodyi (strain ATCC 51908 / MS32) protein is ATP-dependent Clp protease adapter protein ClpS.